Here is a 237-residue protein sequence, read N- to C-terminus: MGTCKYKRVMLKLSGEALAGENGFGIDFNIAMNIAKAVKELVDMGIEVGAVVGGGNIWRGRSGEGMDRTTADYMGMLATSINALALQDSLESLGVDTRVQTAIEMKEIAEPYIRRRAMRHLEKGRVVIFGAGTGNPYFSTDTAAALRAAEIEADVILLAKKVDGVYDKDPHKYDDAKKYDELSYIEVLEQGLQVMDSTATSLCMDNNIPILVFALDNPENIKKVVLGENIGTIVSKK.

Residue 12-15 (KLSG) participates in ATP binding. An involved in allosteric activation by GTP region spans residues 20-25 (GENGFG). Gly54 provides a ligand contact to UMP. Residues Gly55 and Arg59 each coordinate ATP. UMP is bound by residues Asp72 and 133–140 (TGNPYFST). Residues Tyr166 and Asp169 each coordinate ATP.

This sequence belongs to the UMP kinase family. Homohexamer.

It is found in the cytoplasm. The enzyme catalyses UMP + ATP = UDP + ADP. It functions in the pathway pyrimidine metabolism; CTP biosynthesis via de novo pathway; UDP from UMP (UMPK route): step 1/1. Allosterically activated by GTP. Inhibited by UTP. Functionally, catalyzes the reversible phosphorylation of UMP to UDP. The sequence is that of Uridylate kinase from Clostridium perfringens (strain SM101 / Type A).